The sequence spans 977 residues: MERRWPLGLALLLLLLCAPLPPGARAEEVTLMDTSTAQGELGWLLDPPETGWSEVQQMLNGTPLYMYQDCPIQEGGDTDHWLRSNWIYRGEEASRIYVELQFTVRDCKSFPGGAGPLGCKETFNLFYMESDQDVGIQLRRPLFQKVTTVAADQSFTIRDLASGSVKLNVERCSLGHLTRRGLYLAFHNPGSCVALVSVRVFYQRCAETVHGLAHFPDTLPGPGGLVEVAGTCLSHAQISLGSSGTPRMHCSPDGEWLVPVGQCQCEPGYEESSGNVGCTACPTGFYRVDMNTLRCLKCPQHSIAESEGSTICTCENGHYRAPGEGPQVACTRPPSAPQNLSFSTSGTQLSLRWEPPRDTGGRHDIRYSVECLQCRGIAQDGGPCQPCGKGVHFSPAASGLTTSTVQVQGLEPYANYTFTVKSQNRVSGLDSSSPSSASLSINMGHAESLSGLSLKLVKKEPRQLELTWAGSRPRNPGGNLSYELHVLNQDEEWHQMVLEPRVLLTKLQPDTTYIVRVRTLTPLGPGPFSPDHEFRTSPPVSRSLTGGEIVAVIFGLLLGIALLIGIYVFRSRRGQRQRQQRQRERTTNVDREDKLWLKPYVDLQAYEDPAQGALDFAQELDPAWLIVDTVIGEGEFGEVYRGALRLPSQDCKTVAIKTLKDTSPDGYWWNFLREATIMGQFNHPHILRLEGVITKRKPIMIITEFMENGALDAFLKEREDQLAPGQLVAMLLGIASGMNCLSGHNYVHRDLAARNILVNQNLCCKVSDFGLTRLLDDFDGTYETQGGKIPIRWTAPEAIAHRIFTTASDVWSFGIVMWEVLSFGDKPYGEMSNQEVMKSIEDGYRLPPPVDCPAPLYELMKNCWAYDRARRPHFLQLQAHLEQLLTDPHSLRTIANFDPRVTLRLPSLSGSDGIPYRSVSEWLESIRMKRYILHFRSAGLDTMECVLELTAEDLTQMGITLPGHQKRILCSIQGFKD.

The N-terminal stretch at 1–26 is a signal peptide; sequence MERRWPLGLALLLLLLCAPLPPGARA. Residues 27–548 lie on the Extracellular side of the membrane; it reads EEVTLMDTST…PVSRSLTGGE (522 aa). The 183-residue stretch at 28–210 folds into the Eph LBD domain; it reads EVTLMDTSTA…FYQRCAETVH (183 aa). Fibronectin type-III domains follow at residues 333-446 and 448-539; these read PPSA…MGHA and SLSG…TSPP. N-linked (GlcNAc...) asparagine glycosylation is found at Asn-415 and Asn-479. The helical transmembrane segment at 549 to 569 threads the bilayer; that stretch reads IVAVIFGLLLGIALLIGIYVF. Residues 570-977 are Cytoplasmic-facing; it reads RSRRGQRQRQ…ILCSIQGFKD (408 aa). Residues Tyr-600 and Tyr-606 each carry the phosphotyrosine; by autocatalysis modification. Residues 625–885 enclose the Protein kinase domain; sequence LIVDTVIGEG…QLQAHLEQLL (261 aa). ATP is bound by residues 631-639 and Lys-657; that span reads IGEGEFGEV. Asp-750 functions as the Proton acceptor in the catalytic mechanism. Position 782 is a phosphotyrosine; by autocatalysis (Tyr-782). Phosphoserine is present on residues Ser-907 and Ser-911. Residues 914 to 977 form the SAM domain; that stretch reads IPYRSVSEWL…ILCSIQGFKD (64 aa). Residues 975 to 977 carry the PDZ-binding motif; the sequence is FKD.

The protein belongs to the protein kinase superfamily. Tyr protein kinase family. Ephrin receptor subfamily. In terms of assembly, homodimer. Forms a signaling complex with LCK; PTK2B/PYK2 and PI3-kinase upon activation by EFNA1; regulates T-lymphocytes migration. Interacts (via SAM domain) with ILK (via ANK repeats); stimulated by EFNA1 but independent of the kinase activity of EPHA1. Interacts (kinase activity-dependent) with PTK2/FAK1. Phosphorylated. Autophosphorylation is stimulated by its ligand EFNA1. Post-translationally, ubiquitinated. Preferentially expressed in epithelial cells including skin, kidney, liver and thymus. Expressed in myogenic progenitor cells.

The protein resides in the cell membrane. The enzyme catalyses L-tyrosyl-[protein] + ATP = O-phospho-L-tyrosyl-[protein] + ADP + H(+). Its function is as follows. Receptor tyrosine kinase which binds promiscuously membrane-bound ephrin-A family ligands residing on adjacent cells, leading to contact-dependent bidirectional signaling into neighboring cells. The signaling pathway downstream of the receptor is referred to as forward signaling while the signaling pathway downstream of the ephrin ligand is referred to as reverse signaling. Binds with a low affinity EFNA3 and EFNA4 and with a high affinity to EFNA1 which most probably constitutes its cognate/functional ligand. Upon activation by EFNA1 induces cell attachment to the extracellular matrix inhibiting cell spreading and motility through regulation of ILK and downstream RHOA and RAC. Also plays a role in angiogenesis and regulates cell proliferation. May play a role in apoptosis. The chain is Ephrin type-A receptor 1 (Epha1) from Mus musculus (Mouse).